A 183-amino-acid chain; its full sequence is Orotate phosphoribosyltransferase (183 aa).

Residues Arg-21, Lys-88, and 112–120 contribute to the 5-phospho-alpha-D-ribose 1-diphosphate site; that span reads EDVVTTGES. Thr-116 and Arg-144 together coordinate orotate.

It belongs to the purine/pyrimidine phosphoribosyltransferase family. PyrE subfamily. Homodimer. It depends on Mg(2+) as a cofactor.

It carries out the reaction orotidine 5'-phosphate + diphosphate = orotate + 5-phospho-alpha-D-ribose 1-diphosphate. It functions in the pathway pyrimidine metabolism; UMP biosynthesis via de novo pathway; UMP from orotate: step 1/2. Catalyzes the transfer of a ribosyl phosphate group from 5-phosphoribose 1-diphosphate to orotate, leading to the formation of orotidine monophosphate (OMP). The polypeptide is Orotate phosphoribosyltransferase (Thermus thermophilus (strain ATCC BAA-163 / DSM 7039 / HB27)).